A 782-amino-acid chain; its full sequence is E3 ubiquitin-protein ligase SopA (782 aa).

The disordered stretch occupies residues 137–171; it reads VSVSANNRPTVSEGRTPPVSPSLSLQATSSPSSPA. Positions 157-171 are enriched in low complexity; that stretch reads PSLSLQATSSPSSPA. The active-site Glycyl thioester intermediate is the Cys753.

Belongs to the SopA E3 ligase family. Post-translationally, ubiquitinated in the presence of host E1 ubiquitin-activating enzyme, E2 ubiquitin-conjugating enzyme and ubiquitin.

The protein resides in the secreted. It is found in the host cell. The catalysed reaction is S-ubiquitinyl-[E2 ubiquitin-conjugating enzyme]-L-cysteine + [acceptor protein]-L-lysine = [E2 ubiquitin-conjugating enzyme]-L-cysteine + N(6)-ubiquitinyl-[acceptor protein]-L-lysine.. In terms of biological role, effector proteins function to alter host cell physiology and promote bacterial survival in host tissues. This protein is an E3 ubiquitin ligase that interferes with host's ubiquitination pathway. This Salmonella enteritidis PT4 (strain P125109) protein is E3 ubiquitin-protein ligase SopA (sopA).